Reading from the N-terminus, the 307-residue chain is Aspartate carbamoyltransferase catalytic subunit (307 aa).

Positions 54 and 55 each coordinate carbamoyl phosphate. K83 provides a ligand contact to L-aspartate. Carbamoyl phosphate is bound by residues R104, H132, and Q135. L-aspartate is bound by residues R165 and R228. The carbamoyl phosphate site is built by L267 and P268.

This sequence belongs to the aspartate/ornithine carbamoyltransferase superfamily. ATCase family. As to quaternary structure, heterododecamer (2C3:3R2) of six catalytic PyrB chains organized as two trimers (C3), and six regulatory PyrI chains organized as three dimers (R2).

It carries out the reaction carbamoyl phosphate + L-aspartate = N-carbamoyl-L-aspartate + phosphate + H(+). The protein operates within pyrimidine metabolism; UMP biosynthesis via de novo pathway; (S)-dihydroorotate from bicarbonate: step 2/3. In terms of biological role, catalyzes the condensation of carbamoyl phosphate and aspartate to form carbamoyl aspartate and inorganic phosphate, the committed step in the de novo pyrimidine nucleotide biosynthesis pathway. The chain is Aspartate carbamoyltransferase catalytic subunit from Clostridium botulinum (strain ATCC 19397 / Type A).